Consider the following 404-residue polypeptide: Inosine-5'-monophosphate dehydrogenase (404 aa).

Residues aspartate 172 and 222–224 (GIG) each bind NAD(+). The K(+) site is built by glycine 224 and glycine 226. Serine 227 contacts IMP. Cysteine 229 contacts K(+). Cysteine 229 serves as the catalytic Thioimidate intermediate. IMP contacts are provided by residues 262-264 (DGG), 285-286 (GN), and 309-313 (YVGMG). Residue arginine 325 is the Proton acceptor of the active site. Glutamate 340 provides a ligand contact to IMP. Residues glutamate 394, serine 395, and histidine 396 each contribute to the K(+) site.

Belongs to the IMPDH/GMPR family. Homotetramer. It depends on K(+) as a cofactor.

The catalysed reaction is IMP + NAD(+) + H2O = XMP + NADH + H(+). It participates in purine metabolism; XMP biosynthesis via de novo pathway; XMP from IMP: step 1/1. Mycophenolic acid (MPA) is a non-competitive inhibitor that prevents formation of the closed enzyme conformation by binding to the same site as the amobile flap. In contrast, mizoribine monophosphate (MZP) is a competitive inhibitor that induces the closed conformation. MPA is a potent inhibitor of mammalian IMPDHs but a poor inhibitor of the bacterial enzymes. MZP is a more potent inhibitor of bacterial IMPDH. Functionally, catalyzes the conversion of inosine 5'-phosphate (IMP) to xanthosine 5'-phosphate (XMP), the first committed and rate-limiting step in the de novo synthesis of guanine nucleotides, and therefore plays an important role in the regulation of cell growth. Essential for mouse infection by tick bite and critical for the survival in environments that appear to lack sufficient amounts of guanine, guanosine, and/or deoxyguanosine to support spirochete growth, such as mammalian host tissues. The protein is Inosine-5'-monophosphate dehydrogenase of Borreliella burgdorferi (strain ATCC 35210 / DSM 4680 / CIP 102532 / B31) (Borrelia burgdorferi).